A 39-amino-acid chain; its full sequence is Photosystem II reaction center protein J (39 aa).

Residues 9–29 (LWMVATVGGLAAGGLLILFVF) form a helical membrane-spanning segment.

This sequence belongs to the PsbJ family. In terms of assembly, PSII is composed of 1 copy each of membrane proteins PsbA, PsbB, PsbC, PsbD, PsbE, PsbF, PsbH, PsbI, PsbJ, PsbK, PsbL, PsbM, PsbT, PsbX, PsbY, PsbZ, Psb30/Ycf12, at least 3 peripheral proteins of the oxygen-evolving complex and a large number of cofactors. It forms dimeric complexes.

Its subcellular location is the plastid. The protein localises to the chloroplast thylakoid membrane. Its function is as follows. One of the components of the core complex of photosystem II (PSII). PSII is a light-driven water:plastoquinone oxidoreductase that uses light energy to abstract electrons from H(2)O, generating O(2) and a proton gradient subsequently used for ATP formation. It consists of a core antenna complex that captures photons, and an electron transfer chain that converts photonic excitation into a charge separation. The protein is Photosystem II reaction center protein J of Emiliania huxleyi (Coccolithophore).